The sequence spans 205 residues: Cytochrome bo(3) ubiquinol oxidase subunit 3 (205 aa).

The Cytoplasmic segment spans residues Met1–Lys26. Residues Leu27–Val47 form a helical membrane-spanning segment. At Tyr48–Ser69 the chain is on the extracellular side. The chain crosses the membrane as a helical span at residues Ile70–Ala90. The Cytoplasmic portion of the chain corresponds to Met91–Lys97. A helical transmembrane segment spans residues Met98–Val118. Residues His119–Ser138 lie on the Extracellular side of the membrane. A helical membrane pass occupies residues Ile139 to Leu159. Residues Ser160–Arg177 are Cytoplasmic-facing. Residues Ile178–Phe198 form a helical membrane-spanning segment. The Extracellular portion of the chain corresponds to Val199–Ile205.

Belongs to the cytochrome c oxidase subunit 3 family. In terms of assembly, heterooctamer of two A chains, two B chains, two C chains and two D chains.

The protein localises to the cell membrane. Its function is as follows. Cytochrome bo(3) ubiquinol terminal oxidase is the component of the aerobic respiratory chain of E.coli that predominates when cells are grown at high aeration. Has proton pump activity across the membrane in addition to electron transfer, pumping 2 protons/electron. This chain is Cytochrome bo(3) ubiquinol oxidase subunit 3 (cyoC), found in Buchnera aphidicola subsp. Acyrthosiphon pisum (strain APS) (Acyrthosiphon pisum symbiotic bacterium).